The primary structure comprises 263 residues: Ubiquinone/menaquinone biosynthesis C-methyltransferase UbiE (263 aa).

Residues T86, D107, and S152 each contribute to the S-adenosyl-L-methionine site.

The protein belongs to the class I-like SAM-binding methyltransferase superfamily. MenG/UbiE family.

The enzyme catalyses a 2-demethylmenaquinol + S-adenosyl-L-methionine = a menaquinol + S-adenosyl-L-homocysteine + H(+). It carries out the reaction a 2-methoxy-6-(all-trans-polyprenyl)benzene-1,4-diol + S-adenosyl-L-methionine = a 5-methoxy-2-methyl-3-(all-trans-polyprenyl)benzene-1,4-diol + S-adenosyl-L-homocysteine + H(+). It participates in quinol/quinone metabolism; menaquinone biosynthesis; menaquinol from 1,4-dihydroxy-2-naphthoate: step 2/2. The protein operates within cofactor biosynthesis; ubiquinone biosynthesis. Its function is as follows. Methyltransferase required for the conversion of demethylmenaquinol (DMKH2) to menaquinol (MKH2) and the conversion of 2-polyprenyl-6-methoxy-1,4-benzoquinol (DDMQH2) to 2-polyprenyl-3-methyl-6-methoxy-1,4-benzoquinol (DMQH2). The protein is Ubiquinone/menaquinone biosynthesis C-methyltransferase UbiE of Brucella anthropi (strain ATCC 49188 / DSM 6882 / CCUG 24695 / JCM 21032 / LMG 3331 / NBRC 15819 / NCTC 12168 / Alc 37) (Ochrobactrum anthropi).